A 217-amino-acid chain; its full sequence is Small ribosomal subunit protein uS3 (217 aa).

Positions 40-110 constitute a KH type-2 domain; that stretch reads IRDLINKWFN…EVYINIHEVR (71 aa).

It belongs to the universal ribosomal protein uS3 family. As to quaternary structure, part of the 30S ribosomal subunit. Forms a tight complex with proteins S10 and S14.

Its function is as follows. Binds the lower part of the 30S subunit head. Binds mRNA in the 70S ribosome, positioning it for translation. This is Small ribosomal subunit protein uS3 from Rickettsia prowazekii (strain Madrid E).